Reading from the N-terminus, the 175-residue chain is ATP synthase subunit delta (175 aa).

The protein belongs to the ATPase delta chain family. As to quaternary structure, F-type ATPases have 2 components, F(1) - the catalytic core - and F(0) - the membrane proton channel. F(1) has five subunits: alpha(3), beta(3), gamma(1), delta(1), epsilon(1). F(0) has three main subunits: a(1), b(2) and c(10-14). The alpha and beta chains form an alternating ring which encloses part of the gamma chain. F(1) is attached to F(0) by a central stalk formed by the gamma and epsilon chains, while a peripheral stalk is formed by the delta and b chains.

The protein localises to the cell inner membrane. Functionally, f(1)F(0) ATP synthase produces ATP from ADP in the presence of a proton or sodium gradient. F-type ATPases consist of two structural domains, F(1) containing the extramembraneous catalytic core and F(0) containing the membrane proton channel, linked together by a central stalk and a peripheral stalk. During catalysis, ATP synthesis in the catalytic domain of F(1) is coupled via a rotary mechanism of the central stalk subunits to proton translocation. In terms of biological role, this protein is part of the stalk that links CF(0) to CF(1). It either transmits conformational changes from CF(0) to CF(1) or is implicated in proton conduction. The chain is ATP synthase subunit delta from Xanthomonas oryzae pv. oryzae (strain MAFF 311018).